The sequence spans 600 residues: NADH-quinone oxidoreductase subunit C/D (600 aa).

The interval 1–190 (MVNNMTDLTA…SPFELTKAKQ (190 aa)) is NADH dehydrogenase I subunit C. The segment at 214–600 (DFMFLNLGPN…IDFVMSDVDR (387 aa)) is NADH dehydrogenase I subunit D.

It in the N-terminal section; belongs to the complex I 30 kDa subunit family. This sequence in the C-terminal section; belongs to the complex I 49 kDa subunit family. NDH-1 is composed of 13 different subunits. Subunits NuoB, CD, E, F, and G constitute the peripheral sector of the complex.

Its subcellular location is the cell inner membrane. The enzyme catalyses a quinone + NADH + 5 H(+)(in) = a quinol + NAD(+) + 4 H(+)(out). NDH-1 shuttles electrons from NADH, via FMN and iron-sulfur (Fe-S) centers, to quinones in the respiratory chain. The immediate electron acceptor for the enzyme in this species is believed to be ubiquinone. Couples the redox reaction to proton translocation (for every two electrons transferred, four hydrogen ions are translocated across the cytoplasmic membrane), and thus conserves the redox energy in a proton gradient. The chain is NADH-quinone oxidoreductase subunit C/D from Shigella boydii serotype 18 (strain CDC 3083-94 / BS512).